The following is a 153-amino-acid chain: Arginine repressor (153 aa).

It belongs to the ArgR family.

It is found in the cytoplasm. It functions in the pathway amino-acid biosynthesis; L-arginine biosynthesis [regulation]. Regulates arginine biosynthesis genes. This is Arginine repressor from Actinobacillus pleuropneumoniae serotype 5b (strain L20).